The sequence spans 940 residues: Vacuolar protein sorting-associated protein 54 (940 aa).

Thr-30 is modified (phosphothreonine). The segment at 192 to 218 (QQLERDKPLENGAQGAPGPGTGGQTPT) is disordered. A coiled-coil region spans residues 299 to 325 (HAILAEMEQAADQVRQLRAALAELHSH).

Belongs to the VPS54 family.

The protein localises to the golgi apparatus. It is found in the trans-Golgi network. May be involved in retrograde transport from early and late endosomes to late Golgi. Required during spermatogenesis for sperm individualization. The sequence is that of Vacuolar protein sorting-associated protein 54 (scat) from Drosophila melanogaster (Fruit fly).